We begin with the raw amino-acid sequence, 885 residues long: Pyruvate, phosphate dikinase (885 aa).

The interval 1–342 (MQRVYAFEDG…LYMLQTRNGK (342 aa)) is N-terminal. Residue arginine 91 participates in ATP binding. The segment at 343–399 (MNATATVRTGVDMVEEGLITKEQAIMRIAPQSVDQLLHKNMPANYAEAPLVKGLPAS) is linker 1. Residues 400 to 497 (PGAATGAVVF…EVHEGDILTI (98 aa)) are central. Histidine 454 functions as the Tele-phosphohistidine intermediate in the catalytic mechanism. A linker 2 region spans residues 498–533 (DGSTGCVYKGEVPLEEPQVGSGYFGTILKWANEIKK). The C-terminal stretch occupies residues 534–885 (IGVFANADLP…QAQIRHPREN (352 aa)). Arginine 561, arginine 617, glutamate 752, glycine 773, threonine 774, asparagine 775, and aspartate 776 together coordinate substrate. Glutamate 752 is a binding site for Mg(2+). Aspartate 776 provides a ligand contact to Mg(2+). Residue cysteine 839 is the Proton donor of the active site.

Belongs to the PEP-utilizing enzyme family. Homodimer. Mg(2+) is required as a cofactor.

The enzyme catalyses pyruvate + phosphate + ATP = phosphoenolpyruvate + AMP + diphosphate + H(+). Its function is as follows. Catalyzes the dephosphorylation of phosphoenolpyruvate and diphosphate to produce ATP. This chain is Pyruvate, phosphate dikinase, found in Entamoeba histolytica (strain ATCC 30459 / HM-1:IMSS / ABRM).